We begin with the raw amino-acid sequence, 473 residues long: Photosystem II CP43 reaction center protein (473 aa).

Positions 1–14 are excised as a propeptide; sequence MKTLYSLRRFYHVE. The residue at position 15 (threonine 15) is an N-acetylthreonine. Threonine 15 bears the Phosphothreonine mark. Helical transmembrane passes span 69–93, 134–155, 178–200, 255–275, and 291–312; these read LFEV…PHLA, LLGP…KDRN, KALF…RKIT, KPFA…LSYS, and WFNN…ASQA. Glutamate 367 is a binding site for [CaMn4O5] cluster. Residues 447–471 traverse the membrane as a helical segment; the sequence is RARAAAAGFEKGIDRDFEPVLSMTP.

It belongs to the PsbB/PsbC family. PsbC subfamily. In terms of assembly, PSII is composed of 1 copy each of membrane proteins PsbA, PsbB, PsbC, PsbD, PsbE, PsbF, PsbH, PsbI, PsbJ, PsbK, PsbL, PsbM, PsbT, PsbX, PsbY, PsbZ, Psb30/Ycf12, at least 3 peripheral proteins of the oxygen-evolving complex and a large number of cofactors. It forms dimeric complexes. The cofactor is Binds multiple chlorophylls and provides some of the ligands for the Ca-4Mn-5O cluster of the oxygen-evolving complex. It may also provide a ligand for a Cl- that is required for oxygen evolution. PSII binds additional chlorophylls, carotenoids and specific lipids..

The protein resides in the plastid. Its subcellular location is the chloroplast thylakoid membrane. Its function is as follows. One of the components of the core complex of photosystem II (PSII). It binds chlorophyll and helps catalyze the primary light-induced photochemical processes of PSII. PSII is a light-driven water:plastoquinone oxidoreductase, using light energy to abstract electrons from H(2)O, generating O(2) and a proton gradient subsequently used for ATP formation. This Fagopyrum esculentum subsp. ancestrale (Wild buckwheat) protein is Photosystem II CP43 reaction center protein.